The sequence spans 137 residues: Active regulator of SIRT1 (137 aa).

Arg-7 carries the citrulline modification. Low complexity predominate over residues 14–24 (GAPEAPGAAPG). Positions 14 to 58 (GAPEAPGAAPGHTKPSQAPMKRTRKAKATQAQKLRNSAKGKVPKS) are disordered. Ser-84 is subject to Phosphoserine. The interval 96-120 (RQNRGRKACDRPVTKTKKKKKAEGT) is disordered.

Belongs to the AROS family. Part of the small subunit (SSU) processome, composed of more than 70 proteins and the RNA chaperone small nucleolar RNA (snoRNA) U3. Interacts with RPS19; the interaction is direct and mediates the integration of RPS19 in state post-A1. Interacts with SIRT1. Post-translationally, citrullinated by PADI4.

It localises to the nucleus. The protein resides in the nucleolus. Its function is as follows. Part of the small subunit (SSU) processome, first precursor of the small eukaryotic ribosomal subunit. During the assembly of the SSU processome in the nucleolus, many ribosome biogenesis factors, an RNA chaperone and ribosomal proteins associate with the nascent pre-rRNA and work in concert to generate RNA folding, modifications, rearrangements and cleavage as well as targeted degradation of pre-ribosomal RNA by the RNA exosome. Acts as a chaperone that specifically mediates the integration of RPS19 in state post-A1. Direct regulator of SIRT1. Enhances SIRT1-mediated deacetylation of p53/TP53, thereby participating in inhibition of p53/TP53-mediated transcriptional activity. This is Active regulator of SIRT1 (RPS19BP1) from Bos taurus (Bovine).